The chain runs to 244 residues: Protein DMP9 (244 aa).

The interval 1–56 is disordered; that stretch reads MEKTEESVGIRVYTATPPQKPSPSPPSRSPKPVLISSLPSLPSGAAAGGGRGRKRR. The segment covering 18 to 29 has biased composition (pro residues); that stretch reads PQKPSPSPPSRS. Residues 30-45 are compositionally biased toward low complexity; that stretch reads PKPVLISSLPSLPSGA. 4 consecutive transmembrane segments (helical) span residues 71–91, 99–119, 173–193, and 213–233; these read MLVNFLPTGTLLMFEMVLPSI, GINTLMIHLLLLLCAMSCFFF, LTVNDFVHAVMSVLVFMAIAF, and VMESFPIMVGIVCSALFLVFP.

Belongs to the plant DMP1 protein family. Restricted to flowers and pollen.

The protein resides in the endoplasmic reticulum membrane. The protein localises to the vacuole membrane. Its function is as follows. Involved in membrane remodeling. The sequence is that of Protein DMP9 from Arabidopsis thaliana (Mouse-ear cress).